The sequence spans 167 residues: MTKKIAVFPGSFDPFTNGHLDTVKRASRLFDEVVVAAMTNTSKKPLFSSEEKLALISESTAGLPNVKAMAAPKRLTVEFARSIGARFMIRGIRNVADFGYEADIATVNHDLDPEIETVFLLADKQYDALSSTIIKEVAAFGGDVHRFVPAPVEAALYAKLGDAHQTK.

A substrate-binding site is contributed by Ser-11. ATP contacts are provided by residues 11 to 12 (SF) and His-19. Substrate contacts are provided by Lys-43, Thr-76, and Arg-90. ATP-binding positions include 91 to 93 (GIR), Glu-101, and 126 to 132 (YDALSST).

This sequence belongs to the bacterial CoaD family. Homohexamer. Mg(2+) serves as cofactor.

Its subcellular location is the cytoplasm. It catalyses the reaction (R)-4'-phosphopantetheine + ATP + H(+) = 3'-dephospho-CoA + diphosphate. Its pathway is cofactor biosynthesis; coenzyme A biosynthesis; CoA from (R)-pantothenate: step 4/5. Reversibly transfers an adenylyl group from ATP to 4'-phosphopantetheine, yielding dephospho-CoA (dPCoA) and pyrophosphate. This Lacticaseibacillus casei (strain BL23) (Lactobacillus casei) protein is Phosphopantetheine adenylyltransferase.